Consider the following 508-residue polypeptide: Cytochrome P450 monooxygenase aflV (508 aa).

Residues 18 to 38 (LTWWFLAVGGAWIVSKIIKIL) form a helical membrane-spanning segment. N-linked (GlcNAc...) asparagine glycans are attached at residues asparagine 192, asparagine 209, asparagine 302, and asparagine 408. Cysteine 453 contacts heme.

It belongs to the cytochrome P450 family. Requires heme as cofactor.

It is found in the membrane. The protein operates within mycotoxin biosynthesis; aflatoxin biosynthesis. Functionally, cytochrome P450 monooxygenase; part of the gene cluster that mediates the biosynthesis of aflatoxins, a group of polyketide-derived furanocoumarins, and part of the most toxic and carcinogenic compounds among the known mycotoxins. The four major aflatoxins produced by A.parasiticus are aflatoxin B1 (AFB1), aflatoxin B2 (AFB2), aflatoxin G1 (AFG1) and aflatoxin G2 (AFG2). The role of the cytochrome P450 monooxygenase aflV in aflatoxin biosynthesis has still to be characterized. The biosynthesis of aflatoxins begins with the norsolorinic acid synthase aflC that combines a hexanoyl starter unit produced by the fatty acid synthase aflA/aflB and 7 malonyl-CoA extender units to synthesize the precursor NOR. The second step is the conversion of NOR to averantin and requires the norsolorinic acid ketoreductase aflD, which catalyzes the dehydration of norsolorinic acid to form (1'S)-averantin. The norsolorinic acid reductases aflE and aflF may also play a role in the conversion of NOR to AVN. The cytochrome P450 monooxygenase aflG then catalyzes the hydroxylation of AVN to 5'hydroxyaverantin (HAVN). The next step is performed by the 5'-hydroxyaverantin dehydrogenase aflH that transforms HAVN to 5'-oxoaverantin (OAVN) which is further converted to averufin (AVF) by aflK that plays a dual role in the pathway, as a 5'-oxoaverantin cyclase that mediates conversion of 5'-oxoaverantin, as well as a versicolorin B synthase in a later step in the pathway. The averufin oxidase aflI catalyzes the conversion of AVF to versiconal hemiacetal acetate (VHA). VHA is then the substrate for the versiconal hemiacetal acetate esterase aflJ to yield versiconal (VAL). Versicolorin B synthase aflK then converts VAL to versicolorin B (VERB) by closing the bisfuran ring of aflatoxin which is required for DNA-binding, thus giving to aflatoxin its activity as a mutagen. Then, the activity of the versicolorin B desaturase aflL leads to versicolorin A (VERA). A branch point starts from VERB since it can also be converted to dihydrodemethylsterigmatocystin (DMDHST), probably also by aflL, VERA being a precursor for aflatoxins B1 and G1, and DMDHST for aflatoxins B2 and G2. Next, the versicolorin reductase aflM and the cytochrome P450 monooxygenase aflN are involved in conversion of VERA to demethylsterigmatocystin (DMST). AflX and aflY seem also involved in this step, through probable aflX-mediated epoxide ring-opening step following versicolorin A oxidation and aflY-mediated Baeyer-Villiger oxidation required for the formation of the xanthone ring. The methyltransferase aflO then leads to the modification of DMST to sterigmatocystin (ST), and of DMDHST to dihydrosterigmatocystin (DHST). Both ST and DHST are then substrates of the O-methyltransferase aflP to yield O-methylsterigmatocystin (OMST) and dihydro-O-methylsterigmatocystin (DHOMST), respectively. Finally OMST is converted to aflatoxins B1 and G1, and DHOMST to aflatoxins B2 and G2, via the action of several enzymes including O-methylsterigmatocystin oxidoreductase aflQ, the cytochrome P450 monooxygenase aflU, but also the NADH-dependent flavin oxidoreductase nadA which is specifically required for the synthesis of AFG1. The protein is Cytochrome P450 monooxygenase aflV of Aspergillus parasiticus (strain ATCC 56775 / NRRL 5862 / SRRC 143 / SU-1).